We begin with the raw amino-acid sequence, 299 residues long: Putative glycylpeptide N-tetradecanoyltransferase (299 aa).

Belongs to the NMT family.

The enzyme catalyses N-terminal glycyl-[protein] + tetradecanoyl-CoA = N-tetradecanoylglycyl-[protein] + CoA + H(+). Adds a myristoyl group to the N-terminal glycine residue of certain proteins. The protein is Putative glycylpeptide N-tetradecanoyltransferase of Amsacta moorei entomopoxvirus (AmEPV).